The following is a 218-amino-acid chain: Probable WRKY transcription factor 12 (218 aa).

Positions 49-63 are enriched in low complexity; sequence SSLSSPSFPIHNSSS. Disordered stretches follow at residues 49–120 and 199–218; these read SSLS…DMKN and HNHI…LSSF. Over residues 64-77 the composition is skewed to polar residues; sequence TTTTHAPLGFSNNL. Positions 105-116 are enriched in low complexity; the sequence is SNSWWRSNSGSG. Positions 139 to 204 form a DNA-binding region, WRKY; sequence SDVDVLDDGY…YEGRHNHIPS (66 aa).

Belongs to the WRKY group II-c family.

It is found in the nucleus. In terms of biological role, transcription factor. Interacts specifically with the W box (5'-(T)TGAC[CT]-3'), a frequently occurring elicitor-responsive cis-acting element. This Arabidopsis thaliana (Mouse-ear cress) protein is Probable WRKY transcription factor 12 (WRKY12).